The following is a 525-amino-acid chain: GMP synthase [glutamine-hydrolyzing] (525 aa).

One can recognise a Glutamine amidotransferase type-1 domain in the interval 9–207; that stretch reads RILILDFGSQ…VRDICQCEAL (199 aa). Catalysis depends on Cys86, which acts as the Nucleophile. Active-site residues include His181 and Glu183. In terms of domain architecture, GMPS ATP-PPase spans 208 to 400; the sequence is WTPAKIIDDA…LGLPYDMLYR (193 aa). 235–241 serves as a coordination point for ATP; sequence SGGVDSS.

In terms of assembly, homodimer.

It catalyses the reaction XMP + L-glutamine + ATP + H2O = GMP + L-glutamate + AMP + diphosphate + 2 H(+). It participates in purine metabolism; GMP biosynthesis; GMP from XMP (L-Gln route): step 1/1. Its function is as follows. Catalyzes the synthesis of GMP from XMP. This Shigella dysenteriae serotype 1 (strain Sd197) protein is GMP synthase [glutamine-hydrolyzing].